The chain runs to 322 residues: 4-hydroxythreonine-4-phosphate dehydrogenase (322 aa).

Threonine 132 is a substrate binding site. A divalent metal cation-binding residues include histidine 160, histidine 205, and histidine 260. 3 residues coordinate substrate: lysine 268, asparagine 277, and arginine 286.

The protein belongs to the PdxA family. Homodimer. Zn(2+) is required as a cofactor. Mg(2+) serves as cofactor. It depends on Co(2+) as a cofactor.

It is found in the cytoplasm. It catalyses the reaction 4-(phosphooxy)-L-threonine + NAD(+) = 3-amino-2-oxopropyl phosphate + CO2 + NADH. It participates in cofactor biosynthesis; pyridoxine 5'-phosphate biosynthesis; pyridoxine 5'-phosphate from D-erythrose 4-phosphate: step 4/5. Its function is as follows. Catalyzes the NAD(P)-dependent oxidation of 4-(phosphooxy)-L-threonine (HTP) into 2-amino-3-oxo-4-(phosphooxy)butyric acid which spontaneously decarboxylates to form 3-amino-2-oxopropyl phosphate (AHAP). This is 4-hydroxythreonine-4-phosphate dehydrogenase from Xanthomonas oryzae pv. oryzae (strain PXO99A).